Reading from the N-terminus, the 341-residue chain is Phenylalanine--tRNA ligase alpha subunit (341 aa).

Residue E252 participates in Mg(2+) binding.

This sequence belongs to the class-II aminoacyl-tRNA synthetase family. Phe-tRNA synthetase alpha subunit type 1 subfamily. Tetramer of two alpha and two beta subunits. Mg(2+) serves as cofactor.

The protein localises to the cytoplasm. The catalysed reaction is tRNA(Phe) + L-phenylalanine + ATP = L-phenylalanyl-tRNA(Phe) + AMP + diphosphate + H(+). The protein is Phenylalanine--tRNA ligase alpha subunit of Malacoplasma penetrans (strain HF-2) (Mycoplasma penetrans).